The chain runs to 167 residues: 2-C-methyl-D-erythritol 2,4-cyclodiphosphate synthase (167 aa).

Positions 15 and 17 each coordinate a divalent metal cation. 4-CDP-2-C-methyl-D-erythritol 2-phosphate-binding positions include 15–17 and 43–44; these read DIH and HS. His-51 contacts a divalent metal cation. 4-CDP-2-C-methyl-D-erythritol 2-phosphate is bound by residues 65–67, 141–144, and Arg-151; these read DIG and TTNE.

It belongs to the IspF family. As to quaternary structure, homotrimer. Requires a divalent metal cation as cofactor.

The catalysed reaction is 4-CDP-2-C-methyl-D-erythritol 2-phosphate = 2-C-methyl-D-erythritol 2,4-cyclic diphosphate + CMP. The protein operates within isoprenoid biosynthesis; isopentenyl diphosphate biosynthesis via DXP pathway; isopentenyl diphosphate from 1-deoxy-D-xylulose 5-phosphate: step 4/6. In terms of biological role, involved in the biosynthesis of isopentenyl diphosphate (IPP) and dimethylallyl diphosphate (DMAPP), two major building blocks of isoprenoid compounds. Catalyzes the conversion of 4-diphosphocytidyl-2-C-methyl-D-erythritol 2-phosphate (CDP-ME2P) to 2-C-methyl-D-erythritol 2,4-cyclodiphosphate (ME-CPP) with a corresponding release of cytidine 5-monophosphate (CMP). The sequence is that of 2-C-methyl-D-erythritol 2,4-cyclodiphosphate synthase from Prochlorococcus marinus (strain MIT 9312).